Reading from the N-terminus, the 71-residue chain is UPF0346 protein Bcer98_1690 (71 aa).

Belongs to the UPF0346 family.

This Bacillus cytotoxicus (strain DSM 22905 / CIP 110041 / 391-98 / NVH 391-98) protein is UPF0346 protein Bcer98_1690.